The primary structure comprises 187 residues: NADH-quinone oxidoreductase subunit B (187 aa).

Positions 66, 67, 131, and 161 each coordinate [4Fe-4S] cluster.

The protein belongs to the complex I 20 kDa subunit family. NDH-1 is composed of 14 different subunits. Subunits NuoB, C, D, E, F, and G constitute the peripheral sector of the complex. It depends on [4Fe-4S] cluster as a cofactor.

The protein resides in the cell inner membrane. The enzyme catalyses a quinone + NADH + 5 H(+)(in) = a quinol + NAD(+) + 4 H(+)(out). Its function is as follows. NDH-1 shuttles electrons from NADH, via FMN and iron-sulfur (Fe-S) centers, to quinones in the respiratory chain. Couples the redox reaction to proton translocation (for every two electrons transferred, four hydrogen ions are translocated across the cytoplasmic membrane), and thus conserves the redox energy in a proton gradient. The chain is NADH-quinone oxidoreductase subunit B from Rhizorhabdus wittichii (strain DSM 6014 / CCUG 31198 / JCM 15750 / NBRC 105917 / EY 4224 / RW1) (Sphingomonas wittichii).